We begin with the raw amino-acid sequence, 94 residues long: MSEIRVEVVYALPERQYLRNVTLAEGSSVEQAIVASGLLELRGDIDLQSNKVGIYSRPAKLADVLSDGDRVEIYRPLIADPKELRRQRAEKAKK.

Belongs to the UPF0125 (RnfH) family.

This Serratia proteamaculans (strain 568) protein is Protein RnfH.